The sequence spans 380 residues: Tryptophan--tRNA ligase (380 aa).

The short motif at 81–89 is the 'HIGH' region element; that stretch reads PSLGMHIGH. The short motif at 253–257 is the 'KMSKS' region element; sequence KMSSS.

Belongs to the class-I aminoacyl-tRNA synthetase family.

It is found in the cytoplasm. It carries out the reaction tRNA(Trp) + L-tryptophan + ATP = L-tryptophyl-tRNA(Trp) + AMP + diphosphate + H(+). This Saccharolobus solfataricus (strain ATCC 35092 / DSM 1617 / JCM 11322 / P2) (Sulfolobus solfataricus) protein is Tryptophan--tRNA ligase.